A 305-amino-acid polypeptide reads, in one-letter code: 4-diphosphocytidyl-2-C-methyl-D-erythritol kinase (305 aa).

Lys-15 is a catalytic residue. 99 to 109 contacts ATP; it reads PMGGGIGGGSS. The active site involves Asp-141.

The protein belongs to the GHMP kinase family. IspE subfamily.

It carries out the reaction 4-CDP-2-C-methyl-D-erythritol + ATP = 4-CDP-2-C-methyl-D-erythritol 2-phosphate + ADP + H(+). It participates in isoprenoid biosynthesis; isopentenyl diphosphate biosynthesis via DXP pathway; isopentenyl diphosphate from 1-deoxy-D-xylulose 5-phosphate: step 3/6. Catalyzes the phosphorylation of the position 2 hydroxy group of 4-diphosphocytidyl-2C-methyl-D-erythritol. The sequence is that of 4-diphosphocytidyl-2-C-methyl-D-erythritol kinase from Marinomonas sp. (strain MWYL1).